Consider the following 324-residue polypeptide: MDGEEAPPGALNLADYAPAGARTVDCFRRIRKIGEGTYGEVFEAMDIITGERAALKKIKLDDGKEGFPRQILREIKLLKKLDHENIIRLKEIVVSPGTAHGAGGSDDYMYRGDIYMVFEYMDHDLKKVLHHSTPSQVKYYMEQLLKGLHYCHVNNVLHRDIKGANLLISGGGKLLKLADFGLARPFTRDGSFTNHVITLWYRPPELLLGATNYAEAVDIWSVGCIFAEFLLRKPLFPGRTEQEQLSKIFELCGFPNEENWPGVSKLPLYKTIRPTTPTKRRLRDIFHNFDSHAVDLIDRMLILNPTERISAHDALCAAYFITKM.

The region spanning 27-320 (FRRIRKIGEG…AHDALCAAYF (294 aa)) is the Protein kinase domain. ATP-binding positions include 33–41 (IGEGTYGEV) and lysine 56. A Phosphothreonine modification is found at threonine 37. Tyrosine 38 bears the Phosphotyrosine mark. Aspartate 160 acts as the Proton acceptor in catalysis. The residue at position 193 (threonine 193) is a Phosphothreonine.

Belongs to the protein kinase superfamily. CMGC Ser/Thr protein kinase family. CDC2/CDKX subfamily.

The catalysed reaction is L-seryl-[protein] + ATP = O-phospho-L-seryl-[protein] + ADP + H(+). The enzyme catalyses L-threonyl-[protein] + ATP = O-phospho-L-threonyl-[protein] + ADP + H(+). It catalyses the reaction [DNA-directed RNA polymerase] + ATP = phospho-[DNA-directed RNA polymerase] + ADP + H(+). This Oryza sativa subsp. japonica (Rice) protein is Cyclin-dependent kinase C-3 (CDKC-1).